Reading from the N-terminus, the 187-residue chain is Protein GrpE (187 aa).

Positions 1-38 (MSEEKQTVEQNETEEQEIIEEQAAADEQQEETNESELL) are disordered. The segment covering 11–34 (NETEEQEIIEEQAAADEQQEETNE) has biased composition (acidic residues).

Belongs to the GrpE family. Homodimer.

It localises to the cytoplasm. Participates actively in the response to hyperosmotic and heat shock by preventing the aggregation of stress-denatured proteins, in association with DnaK and GrpE. It is the nucleotide exchange factor for DnaK and may function as a thermosensor. Unfolded proteins bind initially to DnaJ; upon interaction with the DnaJ-bound protein, DnaK hydrolyzes its bound ATP, resulting in the formation of a stable complex. GrpE releases ADP from DnaK; ATP binding to DnaK triggers the release of the substrate protein, thus completing the reaction cycle. Several rounds of ATP-dependent interactions between DnaJ, DnaK and GrpE are required for fully efficient folding. The protein is Protein GrpE of Bacillus subtilis (strain 168).